The sequence spans 929 residues: Isoleucine--tRNA ligase (929 aa).

The 'HIGH' region motif lies at 58-68 (PYANGDIHIGH). L-isoleucyl-5'-AMP is bound at residue E563. Residues 605–609 (KMSKS) carry the 'KMSKS' region motif. Residue K608 participates in ATP binding. Zn(2+) is bound by residues C892, C895, C912, and C915.

The protein belongs to the class-I aminoacyl-tRNA synthetase family. IleS type 1 subfamily. As to quaternary structure, monomer. Zn(2+) serves as cofactor.

Its subcellular location is the cytoplasm. The enzyme catalyses tRNA(Ile) + L-isoleucine + ATP = L-isoleucyl-tRNA(Ile) + AMP + diphosphate. In terms of biological role, catalyzes the attachment of isoleucine to tRNA(Ile). As IleRS can inadvertently accommodate and process structurally similar amino acids such as valine, to avoid such errors it has two additional distinct tRNA(Ile)-dependent editing activities. One activity is designated as 'pretransfer' editing and involves the hydrolysis of activated Val-AMP. The other activity is designated 'posttransfer' editing and involves deacylation of mischarged Val-tRNA(Ile). The polypeptide is Isoleucine--tRNA ligase (Neisseria meningitidis serogroup C / serotype 2a (strain ATCC 700532 / DSM 15464 / FAM18)).